Consider the following 195-residue polypeptide: Mannitol operon repressor (195 aa).

Belongs to the MtlR/FumE family. In terms of assembly, homodimer. Can also form higher level multimer aggregates.

Involved in the repression of the expression of the mannitol mtlADR operon. Does not bind the operator/promoter regulatory region of this operon. Therefore, seems to belong to a new class of transcription factors in bacteria that may regulate gene expression indirectly, perhaps as a part of a larger transcriptional complex. This chain is Mannitol operon repressor, found in Escherichia coli O6:H1 (strain CFT073 / ATCC 700928 / UPEC).